The primary structure comprises 354 residues: Sulfate/thiosulfate import ATP-binding protein CysA (354 aa).

The 235-residue stretch at 3–237 folds into the ABC transporter domain; that stretch reads IEVRGLSKRF…PATPFVYGFL (235 aa). Residue 35–42 coordinates ATP; it reads GPSGCGKT.

The protein belongs to the ABC transporter superfamily. Sulfate/tungstate importer (TC 3.A.1.6) family. As to quaternary structure, the complex is composed of two ATP-binding proteins (CysA), two transmembrane proteins (CysT and CysW) and a solute-binding protein (CysP).

It is found in the cell inner membrane. It catalyses the reaction sulfate(out) + ATP + H2O = sulfate(in) + ADP + phosphate + H(+). The enzyme catalyses thiosulfate(out) + ATP + H2O = thiosulfate(in) + ADP + phosphate + H(+). Its function is as follows. Part of the ABC transporter complex CysAWTP involved in sulfate/thiosulfate import. Responsible for energy coupling to the transport system. This chain is Sulfate/thiosulfate import ATP-binding protein CysA, found in Bordetella pertussis (strain Tohama I / ATCC BAA-589 / NCTC 13251).